The chain runs to 333 residues: Glycerol-3-phosphate dehydrogenase [NAD(P)+] (333 aa).

NADPH-binding residues include tryptophan 11, arginine 34, and lysine 107. Residues lysine 107, glycine 136, and serine 138 each coordinate sn-glycerol 3-phosphate. Alanine 140 contacts NADPH. Sn-glycerol 3-phosphate-binding residues include lysine 191, aspartate 244, serine 254, arginine 255, and asparagine 256. Lysine 191 (proton acceptor) is an active-site residue. Residue arginine 255 coordinates NADPH. Residues isoleucine 279 and glutamate 281 each coordinate NADPH.

Belongs to the NAD-dependent glycerol-3-phosphate dehydrogenase family.

Its subcellular location is the cytoplasm. It catalyses the reaction sn-glycerol 3-phosphate + NAD(+) = dihydroxyacetone phosphate + NADH + H(+). The catalysed reaction is sn-glycerol 3-phosphate + NADP(+) = dihydroxyacetone phosphate + NADPH + H(+). It participates in membrane lipid metabolism; glycerophospholipid metabolism. Catalyzes the reduction of the glycolytic intermediate dihydroxyacetone phosphate (DHAP) to sn-glycerol 3-phosphate (G3P), the key precursor for phospholipid synthesis. In Nitrosospira multiformis (strain ATCC 25196 / NCIMB 11849 / C 71), this protein is Glycerol-3-phosphate dehydrogenase [NAD(P)+].